Consider the following 165-residue polypeptide: Protein-export protein SecB (165 aa).

This sequence belongs to the SecB family. As to quaternary structure, homotetramer, a dimer of dimers. One homotetramer interacts with 1 SecA dimer.

The protein resides in the cytoplasm. One of the proteins required for the normal export of preproteins out of the cell cytoplasm. It is a molecular chaperone that binds to a subset of precursor proteins, maintaining them in a translocation-competent state. It also specifically binds to its receptor SecA. This Marinobacter nauticus (strain ATCC 700491 / DSM 11845 / VT8) (Marinobacter aquaeolei) protein is Protein-export protein SecB.